The primary structure comprises 217 residues: Probable GTP-binding protein EngB (217 aa).

The EngB-type G domain occupies 33–217; sequence GPAEIAFAGR…RITIEQAVAR (185 aa). GTP-binding positions include 41 to 48, 68 to 72, 95 to 98, 162 to 165, and 196 to 198; these read GRSNVGKS, GRTQE, DMPG, TKTD, and TSS. Positions 48 and 70 each coordinate Mg(2+).

Belongs to the TRAFAC class TrmE-Era-EngA-EngB-Septin-like GTPase superfamily. EngB GTPase family. The cofactor is Mg(2+).

In terms of biological role, necessary for normal cell division and for the maintenance of normal septation. The sequence is that of Probable GTP-binding protein EngB from Sinorhizobium fredii (strain NBRC 101917 / NGR234).